A 594-amino-acid chain; its full sequence is Solute carrier family 13 member 1 (594 aa).

5 helical membrane passes run 13–33, 40–60, 77–97, 113–133, and 134–154; these read FLLVVFTILVFLPLPLIIRTK, ILFVIAIFWITEALPLSITAL, VASAYFKDFHLLLIGVICLAT, VMMVGVNPAWLTLGFMSSTAF, and LSMWLSNTSTAAMVMPIVEAV. N-linked (GlcNAc...) asparagine glycosylation is present at Asn174. Residues 192-220 show a composition bias toward basic and acidic residues; sequence TNEKKEKTKPAPGSSHDKGKVSRKMETEK. Positions 192–226 are disordered; it reads TNEKKEKTKPAPGSSHDKGKVSRKMETEKNAVTGA. A run of 8 helical transmembrane segments spans residues 239-259, 283-303, 347-367, 380-400, 461-481, 487-507, 511-531, and 552-572; these read LMCLSVAYSSTIGGLTTITGT, SWFLFSFPVALILLLLSWIWL, IVTLVIFIVMALLWFSRDPGF, GYVTDSTVALVAGILFFLIPA, LSPLGSLPVWLIILISSLIVT, ASNPATITILFPILSPLAEAI, PLQILLPSTLCTSFAFLLPVA, and AGLGVNILGVAVVMLGMFTWI. Residue Asn590 is glycosylated (N-linked (GlcNAc...) asparagine).

It belongs to the SLC13A/DASS transporter (TC 2.A.47) family. NADC subfamily. In terms of tissue distribution, highly expressed in kidney and ileum, detected at lower levels in duodenum/jejunum and colon, and at very low levels in cecum, testis, adrenal and adipose tissues. Expressed in the kidney.

The protein resides in the apical cell membrane. It carries out the reaction sulfate(out) + 3 Na(+)(out) = sulfate(in) + 3 Na(+)(in). The enzyme catalyses selenate(out) + 3 Na(+)(out) = selenate(in) + 3 Na(+)(in). The catalysed reaction is thiosulfate(out) + 3 Na(+)(out) = thiosulfate(in) + 3 Na(+)(in). Sodium:sulfate symporter that mediates sulfate reabsorption in the kidney and small intestine. Can also mediate the transport of selenate and thiosulfate. This is Solute carrier family 13 member 1 (Slc13a1) from Mus musculus (Mouse).